The sequence spans 237 residues: Sugar fermentation stimulation protein homolog (237 aa).

The protein belongs to the SfsA family.

In Pseudomonas putida (strain ATCC 700007 / DSM 6899 / JCM 31910 / BCRC 17059 / LMG 24140 / F1), this protein is Sugar fermentation stimulation protein homolog.